A 1337-amino-acid chain; its full sequence is Protein HEG homolog 1 (1337 aa).

An N-terminal signal peptide occupies residues 1-31 (MATPRAPRWPPPSLLLLLLLPLLLLPPAAPG). 2 stretches are compositionally biased toward low complexity: residues 28–40 (AAPGARGSLPSPA) and 54–66 (PGAGHTAPGPGVA). Disordered regions lie at residues 28–149 (AAPG…SNMA), 175–211 (SSLLSLESLPESPSSSRSQRRITPSQTESGTSLGFLE), 235–296 (ASHP…QNPS), 313–675 (VPRT…PSPI), 723–767 (LIPS…TVSL), and 860–909 (EGNR…PQTT). Residues 32–1204 (ARGSLPSPAH…GLNCGNPYQL (1173 aa)) lie on the Extracellular side of the membrane. Positions 118–131 (TAQNARMSHSSSEG) are enriched in polar residues. Positions 175-190 (SSLLSLESLPESPSSS) are enriched in low complexity. Composition is skewed to polar residues over residues 195 to 206 (RITPSQTESGTS), 247 to 258 (VLSQKRNSSGQE), 283 to 296 (IKNGNNFTALQNPS), and 340 to 361 (GITSMSVRSSPSVKDSRTNSGL). The span at 470–480 (RGGGEDSGMGG) shows a compositional bias: gly residues. 2 stretches are compositionally biased toward low complexity: residues 486–502 (SSSSSSSTSSSESLDSS) and 556–575 (SYSEASESSTSSVKISDSPS). Polar residues-rich tracts occupy residues 576–585 (QAQPKQSSMS) and 592–617 (AQSSTESPVLHTSNLPTYTSTVNMPN). Low complexity predominate over residues 637–675 (PSTQPSPSQPQPFSSALPSTRSPGSTSETTTSSPSPSPI). Polar residues-rich tracts occupy residues 725–742 (PSNQTANPKNQSTPQQEK) and 751–763 (SLVSPPTDSTKAV). Residues 868–884 (PTTQPIPLTTSTTSAGE) are compositionally biased toward low complexity. The span at 885 to 896 (RTTELGRAEESS) shows a compositional bias: basic and acidic residues. The segment covering 897-909 (PSHFLTPSSPQTT) has biased composition (polar residues). An EGF-like 1 domain is found at 941–979 (PVNSCTVNPCLHDGKCIVDLTGRGYRCVCPPAWQGENCS). 6 disulfides stabilise this stretch: cysteine 945-cysteine 956, cysteine 950-cysteine 967, cysteine 969-cysteine 978, cysteine 985-cysteine 996, cysteine 990-cysteine 1005, and cysteine 1007-cysteine 1018. The region spanning 981-1019 (DVNECLSSPCPPLATCNNTQGSFTCRCPVGYQLEKGICN) is the EGF-like 2; calcium-binding domain. N-linked (GlcNAc...) asparagine glycosylation is present at asparagine 1093. The helical transmembrane segment at 1205–1225 (ITVVIAAAGGGLLLILGVALI) threads the bilayer. Residues 1226–1337 (VTCCRKSKND…SDESRRRDYF (112 aa)) lie on the Cytoplasmic side of the membrane. The residue at position 1315 (serine 1315) is a Phosphoserine.

Interacts with CCM2 and KRIT1; KRIT1 markedly facilitates interaction with CCM2.

It localises to the cell membrane. The protein resides in the cell junction. Receptor component of the CCM signaling pathway which is a crucial regulator of heart and vessel formation and integrity. May be acting by stabilizing endothelial cell junctions. The sequence is that of Protein HEG homolog 1 (Heg1) from Mus musculus (Mouse).